The sequence spans 373 residues: 2-phosphonomethylmalate synthase (373 aa).

Residues 5–256 enclose the Pyruvate carboxyltransferase domain; it reads LVLEDTTLRD…DLGIDLTKLK (252 aa).

The protein belongs to the alpha-IPM synthase/homocitrate synthase family.

It catalyses the reaction 3-phosphonopyruvate + acetyl-CoA + H2O = (R)-2-(phosphonomethyl)malate + CoA + H(+). Its pathway is antibiotic biosynthesis. Functionally, acyltransferase involved in the biosynthesis of the phosphonate antibiotic FR-900098, a potent antimalarial agent that acts as an inhibitor of 1-deoxy-D-xylulose 5-phosphate reductoisomerase (DXR), the first enzyme in the nonmevalonate pathway for isoprenoid biosynthesis. Catalyzes the condensation between acetyl-CoA and phosphonopyruvate to yield (R)-2-(phosphonomethyl)malate. This chain is 2-phosphonomethylmalate synthase, found in Streptomyces rubellomurinus (strain ATCC 31215).